The primary structure comprises 135 residues: MIVRTLEEIEDTDADIKTENWRSKRIVLAREKVGFSVHETTLYAGTVNDFWYANHIEAVFVFEGEGEITDKATGETHQLKPGSLYLLNNHDKHQVRPKTDMRTVCVFNPPVTGREVHDENGVYPVIVEDEEEAAS.

The protein belongs to the ectoine synthase family.

The catalysed reaction is (2S)-4-acetamido-2-aminobutanoate = L-ectoine + H2O. Its pathway is amine and polyamine biosynthesis; ectoine biosynthesis; L-ectoine from L-aspartate 4-semialdehyde: step 3/3. Its function is as follows. Catalyzes the circularization of gamma-N-acetyl-alpha,gamma-diaminobutyric acid (ADABA) to ectoine (1,4,5,6-tetrahydro-2-methyl-4-pyrimidine carboxylic acid), which is an excellent osmoprotectant. The polypeptide is L-ectoine synthase (Saccharopolyspora erythraea (strain ATCC 11635 / DSM 40517 / JCM 4748 / NBRC 13426 / NCIMB 8594 / NRRL 2338)).